Here is a 553-residue protein sequence, read N- to C-terminus: Formate--tetrahydrofolate ligase (553 aa).

ATP is bound at residue 62 to 69 (TPAGEGKS).

Belongs to the formate--tetrahydrofolate ligase family.

The catalysed reaction is (6S)-5,6,7,8-tetrahydrofolate + formate + ATP = (6R)-10-formyltetrahydrofolate + ADP + phosphate. Its pathway is one-carbon metabolism; tetrahydrofolate interconversion. The chain is Formate--tetrahydrofolate ligase from Pediococcus pentosaceus (strain ATCC 25745 / CCUG 21536 / LMG 10740 / 183-1w).